We begin with the raw amino-acid sequence, 275 residues long: Formamidopyrimidine-DNA glycosylase (275 aa).

Catalysis depends on Pro2, which acts as the Schiff-base intermediate with DNA. The active-site Proton donor is Glu3. The active-site Proton donor; for beta-elimination activity is the Lys59. DNA-binding residues include His92, Arg111, and Lys155. Residues 240–274 form an FPG-type zinc finger; the sequence is YVYGQTGEPCRRCGHEIEKMKLGGRGTHYCPHCQQ. The active-site Proton donor; for delta-elimination activity is Arg264.

The protein belongs to the FPG family. Monomer. It depends on Zn(2+) as a cofactor.

It carries out the reaction Hydrolysis of DNA containing ring-opened 7-methylguanine residues, releasing 2,6-diamino-4-hydroxy-5-(N-methyl)formamidopyrimidine.. It catalyses the reaction 2'-deoxyribonucleotide-(2'-deoxyribose 5'-phosphate)-2'-deoxyribonucleotide-DNA = a 3'-end 2'-deoxyribonucleotide-(2,3-dehydro-2,3-deoxyribose 5'-phosphate)-DNA + a 5'-end 5'-phospho-2'-deoxyribonucleoside-DNA + H(+). Functionally, involved in base excision repair of DNA damaged by oxidation or by mutagenic agents. Acts as a DNA glycosylase that recognizes and removes damaged bases. Has a preference for oxidized purines, such as 7,8-dihydro-8-oxoguanine (8-oxoG). Has AP (apurinic/apyrimidinic) lyase activity and introduces nicks in the DNA strand. Cleaves the DNA backbone by beta-delta elimination to generate a single-strand break at the site of the removed base with both 3'- and 5'-phosphates. The polypeptide is Formamidopyrimidine-DNA glycosylase (Exiguobacterium sp. (strain ATCC BAA-1283 / AT1b)).